A 558-amino-acid polypeptide reads, in one-letter code: Alpha-1,3-mannosyltransferase MNT2 (558 aa).

Over 1-6 (MRRKNR) the chain is Cytoplasmic. The chain crosses the membrane as a helical; Signal-anchor for type II membrane protein span at residues 7–27 (LFILVVLLGIVLVVYYSQLNS). Topologically, residues 28 to 558 (LDLVEPVQSS…QIVDIWNKDI (531 aa)) are lumenal. N-linked (GlcNAc...) asparagine glycosylation occurs at N187.

It belongs to the MNN1/MNT family.

Its subcellular location is the golgi apparatus membrane. It functions in the pathway protein modification; protein glycosylation. Mannosyltransferase involved in adding the 4th and 5th mannose residues of O-linked glycans. This chain is Alpha-1,3-mannosyltransferase MNT2 (MNT2), found in Saccharomyces cerevisiae (strain ATCC 204508 / S288c) (Baker's yeast).